The primary structure comprises 118 residues: Small ribosomal subunit protein uS13 (118 aa).

Residues 91–118 are disordered; that stretch reads HRRSLPLRGQRTKNNARTRKGPKKPIKR.

This sequence belongs to the universal ribosomal protein uS13 family. In terms of assembly, part of the 30S ribosomal subunit. Forms a loose heterodimer with protein S19. Forms two bridges to the 50S subunit in the 70S ribosome.

Its function is as follows. Located at the top of the head of the 30S subunit, it contacts several helices of the 16S rRNA. In the 70S ribosome it contacts the 23S rRNA (bridge B1a) and protein L5 of the 50S subunit (bridge B1b), connecting the 2 subunits; these bridges are implicated in subunit movement. Contacts the tRNAs in the A and P-sites. The chain is Small ribosomal subunit protein uS13 from Hydrogenovibrio crunogenus (strain DSM 25203 / XCL-2) (Thiomicrospira crunogena).